Reading from the N-terminus, the 472-residue chain is Succinate-semialdehyde dehydrogenase [NADP(+)] (472 aa).

Residues 134–135 (WN), 158–161 (KHAS), and 210–211 (GS) each bind NADP(+). Glu232 acts as the Proton acceptor in catalysis. Leu233 provides a ligand contact to NADP(+). Catalysis depends on Cys266, which acts as the Nucleophile. Position 363 (Glu363) interacts with NADP(+).

It belongs to the aldehyde dehydrogenase family.

The enzyme catalyses succinate semialdehyde + NADP(+) + H2O = succinate + NADPH + 2 H(+). Functionally, catalyzes the NADP(+)-dependent oxidation of succinate semialdehyde to succinate. It is believed to be the main source of succinate semialdehyde dehydrogenase activity in Mycobacterium. The protein is Succinate-semialdehyde dehydrogenase [NADP(+)] (gabD1) of Mycolicibacterium paratuberculosis (strain ATCC BAA-968 / K-10) (Mycobacterium paratuberculosis).